A 497-amino-acid polypeptide reads, in one-letter code: Putative aldehyde dehydrogenase AldA (497 aa).

Gly213–Gly219 serves as a coordination point for NAD(+). Catalysis depends on residues Glu257 and Cys291.

The protein belongs to the aldehyde dehydrogenase family.

It catalyses the reaction an aldehyde + NAD(+) + H2O = a carboxylate + NADH + 2 H(+). The protein is Putative aldehyde dehydrogenase AldA (aldA) of Staphylococcus haemolyticus (strain JCSC1435).